Consider the following 540-residue polypeptide: Chaperonin GroEL (540 aa).

ATP-binding positions include 30-33 (TLGP), lysine 51, 87-91 (DGTTT), glycine 415, 479-481 (NAA), and aspartate 495.

This sequence belongs to the chaperonin (HSP60) family. As to quaternary structure, forms a cylinder of 14 subunits composed of two heptameric rings stacked back-to-back. Interacts with the co-chaperonin GroES.

Its subcellular location is the cytoplasm. It carries out the reaction ATP + H2O + a folded polypeptide = ADP + phosphate + an unfolded polypeptide.. Together with its co-chaperonin GroES, plays an essential role in assisting protein folding. The GroEL-GroES system forms a nano-cage that allows encapsulation of the non-native substrate proteins and provides a physical environment optimized to promote and accelerate protein folding. The protein is Chaperonin GroEL of Pectobacterium carotovorum subsp. carotovorum (Erwinia carotovora subsp. carotovora).